The sequence spans 177 residues: Large ribosomal subunit protein uL6 (177 aa).

It belongs to the universal ribosomal protein uL6 family. In terms of assembly, part of the 50S ribosomal subunit.

This protein binds to the 23S rRNA, and is important in its secondary structure. It is located near the subunit interface in the base of the L7/L12 stalk, and near the tRNA binding site of the peptidyltransferase center. This is Large ribosomal subunit protein uL6 from Rickettsia akari (strain Hartford).